The sequence spans 351 residues: High-affinity nickel transport protein (351 aa).

At M1–K19 the chain is on the cytoplasmic side. A helical transmembrane segment spans residues I20–A40. Residues A41–T51 are Periplasmic-facing. The chain crosses the membrane as a helical span at residues A52–I72. Topologically, residues D73–S94 are cytoplasmic. The helical transmembrane segment at L95–L115 threads the bilayer. Residues Q116–V128 are Periplasmic-facing. Residues I129 to L149 form a helical membrane-spanning segment. Residues R150–P199 lie on the Cytoplasmic side of the membrane. The helical transmembrane segment at L200–S220 threads the bilayer. The Periplasmic portion of the chain corresponds to T221–G243. The chain crosses the membrane as a helical span at residues M244 to A264. Topologically, residues K265–K269 are cytoplasmic. The helical transmembrane segment at L270–I290 threads the bilayer. Residues E291 to N316 lie on the Periplasmic side of the membrane. Residues F317 to V337 traverse the membrane as a helical segment. At V338–A351 the chain is on the cytoplasmic side.

It belongs to the NiCoT transporter (TC 2.A.52) family.

The protein resides in the cell inner membrane. High-affinity nickel transporter responsible for nickel uptake. Necessary for high levels of activity of hydrogenase and urease. Does not transport cobalt. In Cupriavidus necator (strain ATCC 17699 / DSM 428 / KCTC 22496 / NCIMB 10442 / H16 / Stanier 337) (Ralstonia eutropha), this protein is High-affinity nickel transport protein (hoxN).